We begin with the raw amino-acid sequence, 87 residues long: MVNMKASMFLTFAGLVLLFVVCYASESEKKEFPKEMLSSIFAVDNDFKQEERDCAGYMRECKEKLCCSGYVCSSRWKWCVLPAPWRR.

The N-terminal stretch at 1 to 24 is a signal peptide; the sequence is MVNMKASMFLTFAGLVLLFVVCYA. Positions 25–52 are excised as a propeptide; sequence SESEKKEFPKEMLSSIFAVDNDFKQEER. Disulfide bonds link cysteine 54-cysteine 67, cysteine 61-cysteine 72, and cysteine 66-cysteine 79.

This sequence belongs to the neurotoxin 10 (Hwtx-1) family. 51 (Hntx-8) subfamily. Hntx-8 sub-subfamily. In terms of tissue distribution, expressed by the venom gland.

The protein localises to the secreted. Functionally, ion channel inhibitor. In Cyriopagopus hainanus (Chinese bird spider), this protein is U3-theraphotoxin-Hhn1a 6.